Here is a 96-residue protein sequence, read N- to C-terminus: Large ribosomal subunit protein bL28 (96 aa).

This sequence belongs to the bacterial ribosomal protein bL28 family.

The protein is Large ribosomal subunit protein bL28 of Parvibaculum lavamentivorans (strain DS-1 / DSM 13023 / NCIMB 13966).